Consider the following 279-residue polypeptide: Large ribosomal subunit protein uL2 (279 aa).

Positions 224–279 are disordered; the sequence is AMNPIDHPHGGGEGRTSGGRHPVTPWGKGTKGNRTRKSKASDKLIVRSRHAKKKGR. The segment covering 269–279 has biased composition (basic residues); that stretch reads VRSRHAKKKGR.

Belongs to the universal ribosomal protein uL2 family. In terms of assembly, part of the 50S ribosomal subunit. Forms a bridge to the 30S subunit in the 70S ribosome.

Its function is as follows. One of the primary rRNA binding proteins. Required for association of the 30S and 50S subunits to form the 70S ribosome, for tRNA binding and peptide bond formation. It has been suggested to have peptidyltransferase activity; this is somewhat controversial. Makes several contacts with the 16S rRNA in the 70S ribosome. This chain is Large ribosomal subunit protein uL2, found in Cereibacter sphaeroides (strain ATCC 17025 / ATH 2.4.3) (Rhodobacter sphaeroides).